The following is an 830-amino-acid chain: DNA gyrase subunit A (830 aa).

Residues 33 to 497 (LPDVRDGLKP…AENDIDIEDL (465 aa)) enclose the Topo IIA-type catalytic domain. Tyr-121 serves as the catalytic O-(5'-phospho-DNA)-tyrosine intermediate. The GyrA-box signature appears at 524–530 (QKRGGRG). Residues 805 to 830 (KDDSEQLEDSEEVSEVHDAEENNSEE) are disordered.

It belongs to the type II topoisomerase GyrA/ParC subunit family. In terms of assembly, heterotetramer, composed of two GyrA and two GyrB chains. In the heterotetramer, GyrA contains the active site tyrosine that forms a transient covalent intermediate with DNA, while GyrB binds cofactors and catalyzes ATP hydrolysis.

It localises to the cytoplasm. It catalyses the reaction ATP-dependent breakage, passage and rejoining of double-stranded DNA.. In terms of biological role, a type II topoisomerase that negatively supercoils closed circular double-stranded (ds) DNA in an ATP-dependent manner to modulate DNA topology and maintain chromosomes in an underwound state. Negative supercoiling favors strand separation, and DNA replication, transcription, recombination and repair, all of which involve strand separation. Also able to catalyze the interconversion of other topological isomers of dsDNA rings, including catenanes and knotted rings. Type II topoisomerases break and join 2 DNA strands simultaneously in an ATP-dependent manner. This is DNA gyrase subunit A from Clostridium acetobutylicum (strain ATCC 824 / DSM 792 / JCM 1419 / IAM 19013 / LMG 5710 / NBRC 13948 / NRRL B-527 / VKM B-1787 / 2291 / W).